Consider the following 154-residue polypeptide: Aspartate carbamoyltransferase regulatory chain (154 aa).

Zn(2+) is bound by residues C109, C114, C138, and C141.

The protein belongs to the PyrI family. Contains catalytic and regulatory chains. It depends on Zn(2+) as a cofactor.

In terms of biological role, involved in allosteric regulation of aspartate carbamoyltransferase. This Aliivibrio salmonicida (strain LFI1238) (Vibrio salmonicida (strain LFI1238)) protein is Aspartate carbamoyltransferase regulatory chain.